Reading from the N-terminus, the 506-residue chain is Ribose import ATP-binding protein RbsA 2 (506 aa).

ABC transporter domains follow at residues 6 to 241 (LSMT…VGRV) and 254 to 499 (EKSN…SITI). Residue 38 to 45 (GENGAGKS) participates in ATP binding.

This sequence belongs to the ABC transporter superfamily. Ribose importer (TC 3.A.1.2.1) family. The complex is composed of an ATP-binding protein (RbsA), two transmembrane proteins (RbsC) and a solute-binding protein (RbsB).

The protein localises to the cell inner membrane. The catalysed reaction is D-ribose(out) + ATP + H2O = D-ribose(in) + ADP + phosphate + H(+). Functionally, part of the ABC transporter complex RbsABC involved in ribose import. Responsible for energy coupling to the transport system. The protein is Ribose import ATP-binding protein RbsA 2 of Agrobacterium fabrum (strain C58 / ATCC 33970) (Agrobacterium tumefaciens (strain C58)).